Reading from the N-terminus, the 176-residue chain is Cytochrome c oxidase subunit 4 isoform 2, mitochondrial (176 aa).

Residues 1–28 (MLRLTAGRVRSLLAGRATAAFSTSSARM) constitute a mitochondrion transit peptide. Residues 29–106 (ASHDLEVAES…TYSEMKQPSS (78 aa)) are Mitochondrial matrix-facing. A helical membrane pass occupies residues 107-132 (EWKTVFGGIFIFLGFTGLVVWWQALY). The Mitochondrial intermembrane portion of the chain corresponds to 133–176 (VYPPRPRTFDDEWKAKQLKRMLDMRVNPIEGFSAKWDYEKGQWK).

It belongs to the cytochrome c oxidase IV family. Component of the cytochrome c oxidase (complex IV, CIV), a multisubunit enzyme composed of 14 subunits. The complex is composed of a catalytic core of 3 subunits MT-CO1, MT-CO2 and MT-CO3, encoded in the mitochondrial DNA, and 11 supernumerary subunits COX4I, COX5A, COX5B, COX6A, COX6B, COX6C, COX7A, COX7B, COX7C, COX8 and NDUFA4, which are encoded in the nuclear genome. The complex exists as a monomer or a dimer and forms supercomplexes (SCs) in the inner mitochondrial membrane with NADH-ubiquinone oxidoreductase (complex I, CI) and ubiquinol-cytochrome c oxidoreductase (cytochrome b-c1 complex, complex III, CIII), resulting in different assemblies (supercomplex SCI(1)III(2)IV(1) and megacomplex MCI(2)III(2)IV(2)).

Its subcellular location is the mitochondrion inner membrane. It functions in the pathway energy metabolism; oxidative phosphorylation. In terms of biological role, component of the cytochrome c oxidase, the last enzyme in the mitochondrial electron transport chain which drives oxidative phosphorylation. The respiratory chain contains 3 multisubunit complexes succinate dehydrogenase (complex II, CII), ubiquinol-cytochrome c oxidoreductase (cytochrome b-c1 complex, complex III, CIII) and cytochrome c oxidase (complex IV, CIV), that cooperate to transfer electrons derived from NADH and succinate to molecular oxygen, creating an electrochemical gradient over the inner membrane that drives transmembrane transport and the ATP synthase. Cytochrome c oxidase is the component of the respiratory chain that catalyzes the reduction of oxygen to water. Electrons originating from reduced cytochrome c in the intermembrane space (IMS) are transferred via the dinuclear copper A center (CU(A)) of subunit 2 and heme A of subunit 1 to the active site in subunit 1, a binuclear center (BNC) formed by heme A3 and copper B (CU(B)). The BNC reduces molecular oxygen to 2 water molecules using 4 electrons from cytochrome c in the IMS and 4 protons from the mitochondrial matrix. The sequence is that of Cytochrome c oxidase subunit 4 isoform 2, mitochondrial from Thunnus obesus (Bigeye tuna).